The sequence spans 500 residues: Cytochrome P450 11B2, mitochondrial (500 aa).

Residues 1–24 constitute a mitochondrion transit peptide; sequence MALRVTADVWLARPWQCLHRTRAL. F381 is a binding site for 21-hydroxyprogesterone. C447 contacts heme.

Belongs to the cytochrome P450 family. Heme serves as cofactor.

The protein localises to the mitochondrion inner membrane. It carries out the reaction a steroid + 2 reduced [adrenodoxin] + O2 + 2 H(+) = an 11beta-hydroxysteroid + 2 oxidized [adrenodoxin] + H2O. It catalyses the reaction 21-hydroxyprogesterone + 2 reduced [adrenodoxin] + O2 + 2 H(+) = corticosterone + 2 oxidized [adrenodoxin] + H2O. The enzyme catalyses corticosterone + 2 reduced [adrenodoxin] + O2 + 2 H(+) = 18-hydroxycorticosterone + 2 oxidized [adrenodoxin] + H2O. The catalysed reaction is 18-hydroxycorticosterone + 2 reduced [adrenodoxin] + O2 + 2 H(+) = aldosterone + 2 oxidized [adrenodoxin] + 2 H2O. It carries out the reaction 11-deoxycortisol + 2 reduced [adrenodoxin] + O2 + 2 H(+) = cortisol + 2 oxidized [adrenodoxin] + H2O. It catalyses the reaction 21-hydroxyprogesterone + 2 reduced [adrenodoxin] + O2 + 2 H(+) = 18-hydroxy-11-deoxycorticosterone + 2 oxidized [adrenodoxin] + H2O. The enzyme catalyses cortisol + 2 reduced [adrenodoxin] + O2 + 2 H(+) = 18-hydroxycortisol + 2 oxidized [adrenodoxin] + H2O. The catalysed reaction is 18-hydroxycortisol + 2 reduced [adrenodoxin] + O2 + 2 H(+) = 18-oxocortisol + 2 oxidized [adrenodoxin] + 2 H2O. Its pathway is steroid biosynthesis. In terms of biological role, a cytochrome P450 monooxygenase that catalyzes the biosynthesis of aldosterone, the main mineralocorticoid in the human body responsible for salt and water homeostasis, thus involved in blood pressure regulation, arterial hypertension, and the development of heart failure. Catalyzes three sequential oxidative reactions of 11-deoxycorticosterone (21-hydroxyprogesterone), namely 11-beta hydroxylation, followed by two successive oxidations at C18 yielding 18-hydroxy and then 18-oxo intermediates (that would not leave the enzyme active site during the consecutive hydroxylation reactions), ending with the formation of aldosterone. Can also produce 18-hydroxycortisol and 18-oxocortisol, derived from successive oxidations of cortisol at C18, normally found at very low levels, but significantly increased in primary aldosteronism, the most common form of secondary hypertension. Mechanistically, uses molecular oxygen inserting one oxygen atom into a substrate and reducing the second into a water molecule. Two electrons are provided by NADPH via a two-protein mitochondrial transfer system comprising flavoprotein FDXR (adrenodoxin/ferredoxin reductase) and nonheme iron-sulfur protein FDX1 or FDX2 (adrenodoxin/ferredoxin). Could also be involved in the androgen metabolic pathway. This is Cytochrome P450 11B2, mitochondrial (Cyp11b2) from Mus musculus (Mouse).